We begin with the raw amino-acid sequence, 227 residues long: 2-C-methyl-D-erythritol 4-phosphate cytidylyltransferase (227 aa).

The protein belongs to the IspD/TarI cytidylyltransferase family. IspD subfamily.

It carries out the reaction 2-C-methyl-D-erythritol 4-phosphate + CTP + H(+) = 4-CDP-2-C-methyl-D-erythritol + diphosphate. Its pathway is isoprenoid biosynthesis; isopentenyl diphosphate biosynthesis via DXP pathway; isopentenyl diphosphate from 1-deoxy-D-xylulose 5-phosphate: step 2/6. Functionally, catalyzes the formation of 4-diphosphocytidyl-2-C-methyl-D-erythritol from CTP and 2-C-methyl-D-erythritol 4-phosphate (MEP). The polypeptide is 2-C-methyl-D-erythritol 4-phosphate cytidylyltransferase (Petrotoga mobilis (strain DSM 10674 / SJ95)).